We begin with the raw amino-acid sequence, 160 residues long: Putative 4-hydroxy-4-methyl-2-oxoglutarate aldolase (160 aa).

Substrate contacts are provided by residues 75–78 (GDLI) and arginine 97. Aspartate 98 contributes to the a divalent metal cation binding site.

This sequence belongs to the class II aldolase/RraA-like family. As to quaternary structure, homotrimer. Requires a divalent metal cation as cofactor.

The catalysed reaction is 4-hydroxy-4-methyl-2-oxoglutarate = 2 pyruvate. It catalyses the reaction oxaloacetate + H(+) = pyruvate + CO2. In terms of biological role, catalyzes the aldol cleavage of 4-hydroxy-4-methyl-2-oxoglutarate (HMG) into 2 molecules of pyruvate. Also contains a secondary oxaloacetate (OAA) decarboxylase activity due to the common pyruvate enolate transition state formed following C-C bond cleavage in the retro-aldol and decarboxylation reactions. The chain is Putative 4-hydroxy-4-methyl-2-oxoglutarate aldolase from Rhodospirillum centenum (strain ATCC 51521 / SW).